The following is a 401-amino-acid chain: Probable tRNA sulfurtransferase (401 aa).

Residues 60 to 165 (EPISEQLKGV…EQATYITFKD (106 aa)) form the THUMP domain. Residues 183–184 (ML), 208–209 (HF), R265, G287, and Q296 each bind ATP.

Belongs to the ThiI family.

The protein resides in the cytoplasm. The catalysed reaction is [ThiI sulfur-carrier protein]-S-sulfanyl-L-cysteine + a uridine in tRNA + 2 reduced [2Fe-2S]-[ferredoxin] + ATP + H(+) = [ThiI sulfur-carrier protein]-L-cysteine + a 4-thiouridine in tRNA + 2 oxidized [2Fe-2S]-[ferredoxin] + AMP + diphosphate. It catalyses the reaction [ThiS sulfur-carrier protein]-C-terminal Gly-Gly-AMP + S-sulfanyl-L-cysteinyl-[cysteine desulfurase] + AH2 = [ThiS sulfur-carrier protein]-C-terminal-Gly-aminoethanethioate + L-cysteinyl-[cysteine desulfurase] + A + AMP + 2 H(+). The protein operates within cofactor biosynthesis; thiamine diphosphate biosynthesis. Its function is as follows. Catalyzes the ATP-dependent transfer of a sulfur to tRNA to produce 4-thiouridine in position 8 of tRNAs, which functions as a near-UV photosensor. Also catalyzes the transfer of sulfur to the sulfur carrier protein ThiS, forming ThiS-thiocarboxylate. This is a step in the synthesis of thiazole, in the thiamine biosynthesis pathway. The sulfur is donated as persulfide by IscS. In Bacillus pumilus (strain SAFR-032), this protein is Probable tRNA sulfurtransferase.